A 159-amino-acid polypeptide reads, in one-letter code: LOB domain-containing protein 25 (159 aa).

The region spanning 38–139 (SPCAACKFLR…RELEETNADL (102 aa)) is the LOB domain.

It belongs to the LOB domain-containing protein family. In terms of tissue distribution, expressed in young shoots, roots, stems, leaves and flowers.

The chain is LOB domain-containing protein 25 (LBD25) from Arabidopsis thaliana (Mouse-ear cress).